We begin with the raw amino-acid sequence, 270 residues long: MARYGVAVVKIGGSIASRLERVADEIAVLAREGLRLVVVHGGGKVVDEYSRRMGVEPRYVLHPSGVRSRYTSWEELEVYVMVMAGLLATSISSELASRGLKVLSLTGLDGLSVEARRRERIVIVNERGRPQAIPGGYTGKIERVDSMFVGSMLQQVDVILYSPVAYGREGDRVVALNVDGDQMAASLSAALKAPLALVTDVPGVILDGRVVDRIRVSEAREIAAKAGVGMNRKILMAAKAVSEGSPYAAIGDPPIQSLINGEKGTLVTRS.

Substrate contacts are provided by residues 42–43, Arg-69, and Asn-177; that span reads GG.

This sequence belongs to the acetylglutamate kinase family. LysZ subfamily.

It is found in the cytoplasm. The enzyme catalyses [amino-group carrier protein]-C-terminal-N-(1,4-dicarboxybutan-1-yl)-L-glutamine + ATP = [amino-group carrier protein]-C-terminal-N-(1-carboxy-5-phosphooxy-5-oxopentan-1-yl)-L-glutamine + ADP. It catalyses the reaction [amino-group carrier protein]-C-terminal-gamma-(L-glutamyl)-L-glutamate + ATP = [amino-group carrier protein]-C-terminal-gamma-(5-phospho-L-glutamyl)-L-glutamate + ADP. Its pathway is amino-acid biosynthesis; L-lysine biosynthesis via AAA pathway; L-lysine from L-alpha-aminoadipate (Thermus route): step 2/5. It participates in amino-acid biosynthesis; L-arginine biosynthesis. Involved in both the arginine and lysine biosynthetic pathways. Phosphorylates the LysW-bound precursors glutamate (for arginine biosynthesis), respectively alpha-aminoadipate (for lysine biosynthesis). This chain is Putative [LysW]-aminoadipate/[LysW]-glutamate kinase, found in Aeropyrum pernix (strain ATCC 700893 / DSM 11879 / JCM 9820 / NBRC 100138 / K1).